We begin with the raw amino-acid sequence, 161 residues long: Ribonuclease H (161 aa).

The RNase H type-1 domain maps to 11–152 (GPRPVVIHTD…ADQLARDGLT (142 aa)). Positions 20, 58, 80, and 144 each coordinate Mg(2+). Residues 137–161 (HDENERADQLARDGLTENRMKSRIG) are disordered.

It belongs to the RNase H family. As to quaternary structure, monomer. It depends on Mg(2+) as a cofactor.

Its subcellular location is the cytoplasm. It catalyses the reaction Endonucleolytic cleavage to 5'-phosphomonoester.. Functionally, endonuclease that specifically degrades the RNA of RNA-DNA hybrids. This is Ribonuclease H from Rhodopseudomonas palustris (strain HaA2).